Reading from the N-terminus, the 161-residue chain is Transcriptional regulator MraZ (161 aa).

2 consecutive SpoVT-AbrB domains span residues Lys7–Val69 and Leu98–Arg141.

It belongs to the MraZ family. As to quaternary structure, forms oligomers.

Its subcellular location is the cytoplasm. It localises to the nucleoid. The chain is Transcriptional regulator MraZ from Chlorobium limicola (strain DSM 245 / NBRC 103803 / 6330).